The sequence spans 535 residues: T-box transcription factor TBX21 (535 aa).

The interval 1-62 (MGIVEPGCGD…SLGSPYPGGA (62 aa)) is disordered. At Ser53 the chain carries Phosphoserine. Tyr77 carries the phosphotyrosine modification. The disordered stretch occupies residues 83 to 109 (AAGFPGAGESFPPPADAEGYQPGEGYA). Tyr118 carries the phosphotyrosine modification. A DNA-binding region (T-box) is located at residues 141–326 (LNNHLLWSKF…NNPFAKGFRE (186 aa)). Tyr220 carries the phosphotyrosine; by ABL1 modification. The residue at position 225 (Ser225) is a Phosphoserine. Tyr266 carries the post-translational modification Phosphotyrosine; by ABL1. Thr303 carries the phosphothreonine modification. Tyr305 carries the phosphotyrosine; by ABL1 modification. Residue Lys314 forms a Glycyl lysine isopeptide (Lys-Gly) (interchain with G-Cter in ubiquitin) linkage. Residues 449–535 (RPMRTLPMEP…EGQFYNYFPN (87 aa)) form a disordered region. The span at 503–520 (SPYPSSGDSSSPAGAPSP) shows a compositional bias: low complexity. Residue Ser513 is modified to Phosphoserine. Position 530 is a phosphotyrosine; by ITK (Tyr530).

In terms of assembly, interacts with RUNX1, RUNX3, ITK, ABL1, RELA, CDK9 and KDM6B. The phosphorylated form (at Thr-303) interacts with NFATC2. Interacts with SMARCA4 in a KDM6B-dependent manner. Interacts with CCTN1. Interacts with USP10. The phosphorylated form (at Tyr-530) interacts with GATA3. In terms of processing, phosphorylations at Ser-53, Tyr-77, Ser-225 and Ser-513 are regulated by mTORC1. Phosphorylation at Tyr-530 is essential for its interaction GATA3. Phosphorylation at Tyr-220, Tyr-266 and Tyr-305 enhances its transcriptional activator activity. Phosphorylation at Thr-303 is required for its interaction with NFATC2. Ubiquitinated at Lys-314, leading to its degradation by the proteasome. Ubiquitination is essential for controlling protein stability, binding to the T-box-binding element of the IFN-gamma promoter, and for interaction with NFATC2 through induction of phosphorylation at Thr-303. Deubiquitinated by USP10 leading to its stabilization. T-cell specific.

It is found in the nucleus. Lineage-defining transcription factor which initiates Th1 lineage development from naive Th precursor cells both by activating Th1 genetic programs and by repressing the opposing Th2 and Th17 genetic programs. Activates transcription of a set of genes important for Th1 cell function, including those encoding IFN-gamma and the chemokine receptor CXCR3. Induces permissive chromatin accessibilty and CpG methylation in IFNG. Activates IFNG and CXCR3 genes in part by recruiting chromatin remodeling complexes including KDM6B, a SMARCA4-containing SWI/SNF-complex, and an H3K4me2-methyltransferase complex to their promoters and all of these complexes serve to establish a more permissive chromatin state conducive with transcriptional activation. Can activate Th1 genes also via recruitment of Mediator complex and P-TEFb (composed of CDK9 and CCNT1/cyclin-T1) in the form of the super elongation complex (SEC) to super-enhancers and associated genes in activated Th1 cells. Inhibits the Th17 cell lineage commitment by blocking RUNX1-mediated transactivation of Th17 cell-specific transcriptinal regulator RORC. Inhibits the Th2 cell lineage commitment by suppressing the production of Th2 cytokines, such as IL-4, IL-5, and IL- 13, via repression of transcriptional regulators GATA3 and NFATC2. Protects Th1 cells from amplifying aberrant type-I IFN response in an IFN-gamma abundant microenvironment by acting as a repressor of type-I IFN transcription factors and type-I IFN-stimulated genes. Acts as a regulator of antiviral B-cell responses; controls chronic viral infection by promoting the antiviral antibody IgG2a isotype switching and via regulation of a broad antiviral gene expression program. Required for the correct development of natural killer (NK) and mucosal-associated invariant T (MAIT) cells. This is T-box transcription factor TBX21 (TBX21) from Homo sapiens (Human).